Reading from the N-terminus, the 911-residue chain is Chromatin assembly factor 1 subunit A (911 aa).

The segment at 1–31 (MLEEPEAATRTAAAVDCKDRPGFPVKRLIQA) is binds PCNA. Residues 166 to 200 (HMEEEPGSPGDPKRTGDCQAGSLQSCPELTPGSRT) are disordered. A binds CBX1 and CBX3 chromo shadow domains region spans residues 176-327 (DPKRTGDCQA…LHRDREQQRE (152 aa)). Over residues 186–200 (GSLQSCPELTPGSRT) the composition is skewed to polar residues. A phosphoserine mark is found at Ser190 and Ser208. The PxVxL motif signature appears at 217-230 (FIEKVPVVVLEDIL). Disordered stretches follow at residues 250–408 (SESE…EEEK) and 578–618 (DSDD…VPHG). Positions 265 to 281 (LSHSSTNSSSPTSSPEG) are enriched in low complexity. Ser293 bears the Phosphoserine mark. Basic and acidic residues predominate over residues 310 to 408 (STEKGRSKLH…EEKRLREEEK (99 aa)). Acidic residues-rich tracts occupy residues 578 to 589 (DSDDEWEEEEPG) and 597 to 612 (GDED…EDDG). The segment at 621-657 (SEDEGVTEECADPENHKVHQKLKAKEWDELLAKGKRF) is necessary for homodimerization and competence for chromatin assembly. The segment at 639–911 (HQKLKAKEWD…APIPAPTLCK (273 aa)) is binds to p60. Ser776 carries the post-translational modification Phosphoserine. Disordered regions lie at residues 819 to 843 (PSAP…MLLK) and 866 to 886 (GSGD…DDTD). A compositionally biased stretch (polar residues) spans 827–839 (GSASTEGPGQSTP). Thr838 is modified (phosphothreonine). A compositionally biased stretch (acidic residues) spans 876–886 (DTEEDEEDDTD).

It belongs to the CHAF1A family. In terms of assembly, homodimer. Part of the CAF-1 complex that contains RBBP4, CHAF1B and CHAF1A. CHAF1A binds directly to CHAF1B. Only minor amounts of RBBP4 are complexed with CHAF1A and CHAF1B in G1 phase. Interacts with PCNA; the interaction is direct. Interacts (via the PxVxL motif) with CBX5; the interaction is direct. Interacts with MBD1. Interacts with histones H3.1, H3.2 and H3.1t.

The protein localises to the nucleus. Acts as a component of the histone chaperone complex chromatin assembly factor 1 (CAF-1), which assembles histone octamers onto DNA during replication and repair. CAF-1 performs the first step of the nucleosome assembly process, bringing newly synthesized histones H3 and H4 to replicating DNA; histones H2A/H2B can bind to this chromatin precursor subsequent to DNA replication to complete the histone octamer. It may play a role in heterochromatin maintenance in proliferating cells by bringing newly synthesized cbx proteins to heterochromatic DNA replication foci. This Mus musculus (Mouse) protein is Chromatin assembly factor 1 subunit A.